The primary structure comprises 269 residues: 4-hydroxy-tetrahydrodipicolinate reductase (269 aa).

NAD(+)-binding positions include 11–16 (GASGRM) and glutamate 37. Arginine 38 provides a ligand contact to NADP(+). NAD(+) contacts are provided by residues 101–103 (GTT) and 125–128 (AGNM). The active-site Proton donor/acceptor is the histidine 158. Residue histidine 159 participates in (S)-2,3,4,5-tetrahydrodipicolinate binding. Lysine 162 functions as the Proton donor in the catalytic mechanism. 168-169 (GT) lines the (S)-2,3,4,5-tetrahydrodipicolinate pocket.

The protein belongs to the DapB family.

The protein localises to the cytoplasm. The catalysed reaction is (S)-2,3,4,5-tetrahydrodipicolinate + NAD(+) + H2O = (2S,4S)-4-hydroxy-2,3,4,5-tetrahydrodipicolinate + NADH + H(+). It catalyses the reaction (S)-2,3,4,5-tetrahydrodipicolinate + NADP(+) + H2O = (2S,4S)-4-hydroxy-2,3,4,5-tetrahydrodipicolinate + NADPH + H(+). It functions in the pathway amino-acid biosynthesis; L-lysine biosynthesis via DAP pathway; (S)-tetrahydrodipicolinate from L-aspartate: step 4/4. Catalyzes the conversion of 4-hydroxy-tetrahydrodipicolinate (HTPA) to tetrahydrodipicolinate. This is 4-hydroxy-tetrahydrodipicolinate reductase from Ruegeria pomeroyi (strain ATCC 700808 / DSM 15171 / DSS-3) (Silicibacter pomeroyi).